A 579-amino-acid polypeptide reads, in one-letter code: Folliculin (579 aa).

The segment at 31-82 (QGAGSGDSPDQVEQAEEEEGGIQMSSRVRAHSPAEGASSESSSPGPKKSDMC) is disordered. 2 positions are modified to phosphoserine: Ser62 and Ser73. Over residues 63-76 (PAEGASSESSSPGP) the composition is skewed to low complexity. One can recognise a uDENN FLCN/SMCR8-type domain in the interval 86–242 (RSLAVGHPGY…RNGNAARSLT (157 aa)). Residues 287–310 (EKLADLEEESESWDNSEAEEEEKA) are a coiled coil. Residues 294-308 (EESESWDNSEAEEEE) are compositionally biased toward acidic residues. The disordered stretch occupies residues 294 to 323 (EESESWDNSEAEEEEKAPVTPEGAEGRELT). Phosphoserine occurs at positions 302, 406, 537, 542, and 571. The 153-residue stretch at 339 to 491 (QPPKLTGFKS…ILNKIEAALT (153 aa)) folds into the cDENN FLCN/SMCR8-type domain. The dDENN FLCN/SMCR8-type domain occupies 493–558 (QNLSVDVVDQ…LLKFWMTGLS (66 aa)).

Belongs to the folliculin family. In terms of assembly, interacts (via C-terminus) with FNIP1 or FNIP2 (via C-terminus). Component of the lysosomal folliculin complex (LFC), composed of FLCN, FNIP1 (or FNIP2), RagA/RRAGA or RagB/RRAGB GDP-bound, RagC/RRAGC or RagD/RRAGD GTP-bound, and Ragulator. Interaction with FNIP1 or FNIP2 mediates indirect interaction with the PRKAA1, PRKAB1 and PRKAG1 subunits of 5'-AMP-activated protein kinase (AMPK). Interacts with HSP90AA1 in the presence of FNIP1. Interacts with HSP70, STUB1, CDC37, AHSA1, CCT2, STIP1, PTGES3 and PPP5C. Interacts with GABARAP; interaction takes place in the presence of FNIP1 and/or FNIP2. Interacts with RILP; the interaction is direct and promotes association between RILP and RAB34. Interacts with KIF3A and KIF3B. Interacts with lactate dehydrogenase LDHA, but not LDHB; the interaction is direct, may preferentially bind LDHA dimers rather than tetramers, and regulates LDHA activity, acting as an uncompetitive inhibitor. Phosphorylation by ULK1 modulates the interaction with GABARAP and is required to regulate autophagy. In terms of tissue distribution, highly expressed in adult heart, pancreas, and prostate with moderate expression in adult brain, kidney, liver, adipose tissue and lung.

It is found in the lysosome membrane. The protein resides in the cytoplasm. Its subcellular location is the cytosol. It localises to the cell projection. The protein localises to the cilium. It is found in the cytoskeleton. The protein resides in the microtubule organizing center. Its subcellular location is the centrosome. It localises to the spindle. The protein localises to the nucleus. GTPase-activating activity is inhibited in the folliculin complex (LFC), which stabilizes the GDP-bound state of RagA/RRAGA (or RagB/RRAGB), because Arg-164 is located far from the RagC/RRAGC or RagD/RRAGD nucleotide pocket. Disassembly of the LFC complex upon amino acid restimulation liberates the GTPase-activating activity. Multi-functional protein, involved in both the cellular response to amino acid availability and in the regulation of glycolysis. GTPase-activating protein that plays a key role in the cellular response to amino acid availability through regulation of the non-canonical mTORC1 signaling cascade controlling the MiT/TFE factors TFEB and TFE3. Activates mTORC1 by acting as a GTPase-activating protein: specifically stimulates GTP hydrolysis by RagC/RRAGC or RagD/RRAGD, promoting the conversion to the GDP-bound state of RagC/RRAGC or RagD/RRAGD, and thereby activating the kinase activity of mTORC1. The GTPase-activating activity is inhibited during starvation and activated in presence of nutrients. Acts as a key component for non-canonical mTORC1-dependent control of the MiT/TFE factors TFEB and TFE3, while it is not involved in mTORC1-dependent phosphorylation of canonical RPS6KB1/S6K1 and EIF4EBP1/4E-BP1. In low-amino acid conditions, the lysosomal folliculin complex (LFC) is formed on the membrane of lysosomes, which inhibits the GTPase-activating activity of FLCN, inactivates mTORC1 and maximizes nuclear translocation of TFEB and TFE3. Upon amino acid restimulation, RagA/RRAGA (or RagB/RRAGB) nucleotide exchange promotes disassembly of the LFC complex and liberates the GTPase-activating activity of FLCN, leading to activation of mTORC1 and subsequent cytoplasmic retention of TFEB and TFE3. Indirectly acts as a positive regulator of Wnt signaling by promoting mTOR-dependent cytoplasmic retention of MiT/TFE factor TFE3. Required for the exit of hematopoietic stem cell from pluripotency by promoting mTOR-dependent cytoplasmic retention of TFE3, thereby increasing Wnt signaling. Involved in the control of embryonic stem cells differentiation; together with LAMTOR1 it is necessary to recruit and activate RagC/RRAGC and RagD/RRAGD at the lysosomes, and to induce exit of embryonic stem cells from pluripotency via non-canonical, mTOR-independent TFE3 inactivation. Acts as an inhibitor of browning of adipose tissue by regulating mTOR-dependent cytoplasmic retention of TFE3. In response to flow stress, regulates STK11/LKB1 accumulation and mTORC1 activation through primary cilia: may act by recruiting STK11/LKB1 to primary cilia for activation of AMPK resided at basal bodies, causing mTORC1 down-regulation. Together with FNIP1 and/or FNIP2, regulates autophagy: following phosphorylation by ULK1, interacts with GABARAP and promotes autophagy. Required for starvation-induced perinuclear clustering of lysosomes by promoting association of RILP with its effector RAB34. Regulates glycolysis by binding to lactate dehydrogenase LDHA, acting as an uncompetitive inhibitor. This is Folliculin from Mus musculus (Mouse).